The primary structure comprises 393 residues: Proteasome-activating nucleotidase (393 aa).

Residues 15–53 adopt a coiled-coil conformation; that stretch reads DEVQLVRLLEEKIKSLQIEIENLRKELNYYKAEMEKMLS. Residues 178–183 and Y317 each bind ATP; that span reads GTGKTM. Residues 365–393 adopt a coiled-coil conformation; that stretch reads MNDLVEAINKINVKRNKMESMKERREKYS. Residues 391 to 393 are docks into pockets in the proteasome alpha-ring to cause gate opening; the sequence is KYS.

Belongs to the AAA ATPase family. As to quaternary structure, homohexamer. The hexameric complex has a two-ring architecture resembling a top hat that caps the 20S proteasome core at one or both ends. Upon ATP-binding, the C-terminus of PAN interacts with the alpha-rings of the proteasome core by binding to the intersubunit pockets.

The protein localises to the cytoplasm. Its function is as follows. ATPase which is responsible for recognizing, binding, unfolding and translocation of substrate proteins into the archaeal 20S proteasome core particle. Is essential for opening the gate of the 20S proteasome via an interaction with its C-terminus, thereby allowing substrate entry and access to the site of proteolysis. Thus, the C-termini of the proteasomal ATPase function like a 'key in a lock' to induce gate opening and therefore regulate proteolysis. Unfolding activity requires energy from ATP hydrolysis, whereas ATP binding alone promotes ATPase-20S proteasome association which triggers gate opening, and supports translocation of unfolded substrates. The polypeptide is Proteasome-activating nucleotidase (Saccharolobus solfataricus (strain ATCC 35092 / DSM 1617 / JCM 11322 / P2) (Sulfolobus solfataricus)).